Reading from the N-terminus, the 323-residue chain is Aldo-keto reductase family 1 member C3 (323 aa).

Residues 23-24 (TY) and D50 each bind NADP(+). Y55 functions as the Proton donor in the catalytic mechanism. H117 is a binding site for substrate. NADP(+)-binding positions include 166–167 (SN), Q190, 216–222 (YSALGSQ), 270–272 (KSY), and 276–280 (RIRQN).

This sequence belongs to the aldo/keto reductase family. In terms of tissue distribution, expressed in many tissues including adrenal gland, brain, kidney, liver, lung, mammary gland, placenta, small intestine, colon, spleen, prostate and testis. High expression in prostate and mammary gland. In the prostate, higher levels in epithelial cells than in stromal cells. In the brain, expressed in medulla, spinal cord, frontotemporal lobes, thalamus, subthalamic nuclei and amygdala. Weaker expression in the hippocampus, substantia nigra and caudate.

It is found in the cytoplasm. It carries out the reaction a 3alpha-hydroxysteroid + NADP(+) = a 3-oxosteroid + NADPH + H(+). The catalysed reaction is a 3alpha-hydroxysteroid + NAD(+) = a 3-oxosteroid + NADH + H(+). The enzyme catalyses prostaglandin F2alpha + NADP(+) = prostaglandin D2 + NADPH + H(+). It catalyses the reaction prostaglandin F2alpha + NADP(+) = prostaglandin H2 + NADPH + H(+). It carries out the reaction prostaglandin D2 + NADPH + H(+) = 11beta-prostaglandin F2 + NADP(+). The catalysed reaction is prostaglandin D2-ethanolamide + NADPH + H(+) = 11beta-prostaglandin F2-ethanolamide + NADP(+). The enzyme catalyses testosterone + NAD(+) = androst-4-ene-3,17-dione + NADH + H(+). It catalyses the reaction testosterone + NADP(+) = androst-4-ene-3,17-dione + NADPH + H(+). It carries out the reaction 17beta-estradiol + NADP(+) = estrone + NADPH + H(+). The catalysed reaction is 17beta-estradiol + NAD(+) = estrone + NADH + H(+). The enzyme catalyses (20S)-hydroxypregn-4-en-3-one + NADP(+) = progesterone + NADPH + H(+). It catalyses the reaction (20S)-hydroxypregn-4-en-3-one + NAD(+) = progesterone + NADH + H(+). It carries out the reaction 5alpha-androstane-3alpha,17beta-diol + NADP(+) = 17beta-hydroxy-5alpha-androstan-3-one + NADPH + H(+). The catalysed reaction is 5alpha-androstane-3alpha,17beta-diol + NAD(+) = 17beta-hydroxy-5alpha-androstan-3-one + NADH + H(+). The enzyme catalyses androsterone + NADPH + H(+) = 5alpha-androstane-3alpha,17beta-diol + NADP(+). It catalyses the reaction 5alpha-androstane-3alpha,17beta-diol + NAD(+) = androsterone + NADH + H(+). It carries out the reaction 5alpha-androstane-3beta,17beta-diol + NADP(+) = 17beta-hydroxy-5alpha-androstan-3-one + NADPH + H(+). The catalysed reaction is 9-cis-retinol + NADP(+) = 9-cis-retinal + NADPH + H(+). It functions in the pathway steroid metabolism. Strongly inhibited by nonsteroidal anti-inflammatory drugs (NSAID) including flufenamic acid and indomethacin. Also inhibited by the flavinoid, rutin, and by selective serotonin inhibitors (SSRIs). The oxidation reaction is inhibited by low micromolar concentrations of NADPH. Its function is as follows. Cytosolic aldo-keto reductase that catalyzes the NADH and NADPH-dependent reduction of ketosteroids to hydroxysteroids. Acts as a NAD(P)(H)-dependent 3-, 17- and 20-ketosteroid reductase on the steroid nucleus and side chain and regulates the metabolism of androgens, estrogens and progesterone. Displays the ability to catalyze both oxidation and reduction in vitro, but most probably acts as a reductase in vivo since the oxidase activity measured in vitro is inhibited by physiological concentration of NADPH. Acts preferentially as a 17-ketosteroid reductase and has the highest catalytic efficiency of the AKR1C enzyme for the reduction of delta4-androstenedione to form testosterone. Reduces prostaglandin (PG) D2 to 11beta-prostaglandin F2, progesterone to 20alpha-hydroxyprogesterone and estrone to 17beta-estradiol. Catalyzes the transformation of the potent androgen dihydrotestosterone (DHT) into the less active form, 5-alpha-androstan-3-alpha,17-beta-diol (3-alpha-diol). Also displays retinaldehyde reductase activity toward 9-cis-retinal. In Homo sapiens (Human), this protein is Aldo-keto reductase family 1 member C3 (AKR1C3).